We begin with the raw amino-acid sequence, 196 residues long: Segregation and condensation protein B (196 aa).

It belongs to the ScpB family. As to quaternary structure, homodimer. Homodimerization may be required to stabilize the binding of ScpA to the Smc head domains. Component of a cohesin-like complex composed of ScpA, ScpB and the Smc homodimer, in which ScpA and ScpB bind to the head domain of Smc. The presence of the three proteins is required for the association of the complex with DNA.

It localises to the cytoplasm. In terms of biological role, participates in chromosomal partition during cell division. May act via the formation of a condensin-like complex containing Smc and ScpA that pull DNA away from mid-cell into both cell halves. The polypeptide is Segregation and condensation protein B (Lactobacillus johnsonii (strain CNCM I-12250 / La1 / NCC 533)).